A 259-amino-acid chain; its full sequence is uncharacterized protein (259 aa).

Transmembrane regions (helical) follow at residues 55–75 (ILIL…SYLI), 85–105 (FPSI…FFSS), and 127–147 (FFFA…LCCG).

The protein localises to the membrane. This is an uncharacterized protein from Arabidopsis thaliana (Mouse-ear cress).